Here is a 28-residue protein sequence, read N- to C-terminus: Chassatide C12 (28 aa).

Positions 1-28 (EYCGESCYLIPCFTPGCYCVSRQCVNKN) form a cross-link, cyclopeptide (Glu-Asn). Cystine bridges form between cysteine 3–cysteine 17, cysteine 7–cysteine 19, and cysteine 12–cysteine 24.

In terms of processing, this is a cyclic peptide. Expressed in fruit, pedicel, leaf and stem but not in root (at protein level).

Functionally, probably participates in a plant defense mechanism. In Chassalia chartacea (Chassalia curviflora), this protein is Chassatide C12.